The primary structure comprises 190 residues: Copper-binding lipoprotein NosL (190 aa).

An N-terminal signal peptide occupies residues 1–23 (MNALHRIGAGTLLAVLLAFGLTG). C24 carries N-palmitoyl cysteine lipidation. C24 is lipidated: S-diacylglycerol cysteine. The segment at 170 to 190 (MQHGGMHDHAPNGAHNAHAGH) is disordered. A compositionally biased stretch (low complexity) spans 180–190 (PNGAHNAHAGH).

This sequence belongs to the NosL family. Monomer.

Its subcellular location is the cell membrane. In terms of biological role, may act as a metallochaperone involved in nitrous oxide reductase assembly. Specifically binds Cu(+). The protein is Copper-binding lipoprotein NosL of Stutzerimonas stutzeri (Pseudomonas stutzeri).